The primary structure comprises 352 residues: tRNA (guanine(26)-N(2))-dimethyltransferase (352 aa).

One can recognise a Trm1 methyltransferase domain in the interval 4–350 (ILNKEGAVEF…ANYDEIARIL (347 aa)). S-adenosyl-L-methionine-binding residues include Arg39, Arg65, Asp83, Asp109, and Ala110.

The protein belongs to the class I-like SAM-binding methyltransferase superfamily. Trm1 family.

It catalyses the reaction guanosine(26) in tRNA + 2 S-adenosyl-L-methionine = N(2)-dimethylguanosine(26) in tRNA + 2 S-adenosyl-L-homocysteine + 2 H(+). Its function is as follows. Dimethylates a single guanine residue at position 26 of a number of tRNAs using S-adenosyl-L-methionine as donor of the methyl groups. The chain is tRNA (guanine(26)-N(2))-dimethyltransferase from Pyrobaculum islandicum (strain DSM 4184 / JCM 9189 / GEO3).